The primary structure comprises 154 residues: Ferredoxin C 1, chloroplastic (154 aa).

Residues 1–56 (MATLPLPTQTSTISLPKPYLSNSFSFPLRNATLSTTTNRRNFLTTGRIIARAYKVV) constitute a chloroplast transit peptide. The 86-residue stretch at 57 to 142 (VEHDGKTTEL…DCHIKMIPEE (86 aa)) folds into the 2Fe-2S ferredoxin-type domain. C89, C94, C97, and C126 together coordinate [2Fe-2S] cluster.

This sequence belongs to the 2Fe2S plant-type ferredoxin family. [2Fe-2S] cluster is required as a cofactor.

It localises to the plastid. The protein localises to the chloroplast. Its function is as follows. Ferredoxins are iron-sulfur proteins that transfer electrons in a wide variety of metabolic reactions. Mediates alternative electron partitioning in conditions of acceptor limitation at photosystem I. Accepts electrons from photosystem I (PSI) and is capable of electron transfer with FNR, but cannot support photoreduction of NADP(+). The chain is Ferredoxin C 1, chloroplastic from Arabidopsis thaliana (Mouse-ear cress).